Consider the following 486-residue polypeptide: Transcription factor bHLH49 (486 aa).

The span at 1–17 (MDLSAKDEFSAEKRNPD) shows a compositional bias: basic and acidic residues. Disordered stretches follow at residues 1–30 (MDLSAKDEFSAEKRNPDNYDSVNNPSGDWR) and 194–300 (KEST…KDGY). 2 stretches are compositionally biased toward polar residues: residues 198–221 (VRSSEQAKPNVPGSGNVSEDTQSS) and 243–254 (QKNSEAAQSHRS). The segment covering 273–293 (QSPNSPGKKSNSGKQQGKQSS) has biased composition (low complexity). The bHLH domain occupies 309–359 (QATNSHSLAERVRREKISERMKFLQDLVPGCNKVTGKAVMLDEIINYVQSL).

Homodimer. Interacts with IBH1. In terms of tissue distribution, expressed constitutively in roots, stems, and flowers.

Its subcellular location is the nucleus. Its function is as follows. Transcriptional activator involved in cell elongation. Regulates the expression of a subset of genes involved in cell expansion by binding to the G-box motif. This is Transcription factor bHLH49 (BHLH49) from Arabidopsis thaliana (Mouse-ear cress).